Reading from the N-terminus, the 508-residue chain is Photosystem II CP47 reaction center protein (508 aa).

The next 6 helical transmembrane spans lie at 21–36, 101–115, 140–156, 203–218, 237–252, and 457–472; these read SVHI…WAGS, IVFS…IWHW, GIHL…FGAF, IAAG…FHLS, VLSS…AFVV, and SFAL…HGAR.

Belongs to the PsbB/PsbC family. PsbB subfamily. PSII is composed of 1 copy each of membrane proteins PsbA, PsbB, PsbC, PsbD, PsbE, PsbF, PsbH, PsbI, PsbJ, PsbK, PsbL, PsbM, PsbT, PsbX, PsbY, PsbZ, Psb30/Ycf12, at least 3 peripheral proteins of the oxygen-evolving complex and a large number of cofactors. It forms dimeric complexes. Binds multiple chlorophylls. PSII binds additional chlorophylls, carotenoids and specific lipids. is required as a cofactor.

Its subcellular location is the plastid. The protein localises to the chloroplast thylakoid membrane. Its function is as follows. One of the components of the core complex of photosystem II (PSII). It binds chlorophyll and helps catalyze the primary light-induced photochemical processes of PSII. PSII is a light-driven water:plastoquinone oxidoreductase, using light energy to abstract electrons from H(2)O, generating O(2) and a proton gradient subsequently used for ATP formation. The chain is Photosystem II CP47 reaction center protein from Atropa belladonna (Belladonna).